Reading from the N-terminus, the 2156-residue chain is MAGGILQLVCNATAAENMWINNDPEITFFKKLFRRHTPFASEYIPLYFKSNLDFGQSSSATILSNGDLVHKIFFVCDIPSISAEFINSKNEDVIKTIKNLNSQYIDNDFMRKLNNCINGTIIEYDNICNIIDENIQYYDYYKPIIISIINTLSKYQNKDVLINYQQKIFGKLLNKSNDNLSQNESFQNDSFKLEILDSFFSTNVKYNLVFELIKLIDLEQQFYSQKIPIIPIQNTGKYLANNFVNSVLPAVNNLGNNFGKDFYHRLNTHNAIIGAIESLSISVPTVIIKPFVLNDCYDIYRPNNQNVYFDSTYYSSIIDPNFKLNFMLKSNQVEKYIQSNEFIPIDIIGTNDFIYPEIDNNYNLLFNTQANIMFDNIQSFTDLLFEHYRNLLFDSTENLFFNKSPTPSNIYSYILPTKAYDTKSNNLSDEKINDGPNVFNLNIWFFYFFKYLDQFDVDKFIVYVKDNVHKNLSNACYSFLRNMMVLLKINVDYYMHEISYYMNDMCSKSPSHDLSDTLKNYVPNISESTNQFNKQSGSNLLMVTLIFHRNIIPSIEDMFNFIYEFIENINCNDIENYLEVEIGFVDRETLTELKSTAKQLYQGFYNYFMNKYNKMHFEAEYHCEEINPLVQEYVNHFLTGTSIHDKFYQKRNLNDIIHQLEFYFISETIHIRELQKFYYNIFSNNNLIKNYVDDYGCELIDYFNSVLKTDLEQKYYKVNNIHRYNGESYKMTPYNTRFYGLNDNLPLVYPFDHPPVNPYGVNPDYYSHYRSVTDYVTIPTSNNQILCTEIPINLNNTEPINNRYNDSEYQRFEIDYFRLKHEIFHGTIDNPISDLYKIFISEYDFNVLKLYHLLQQLLDQSNTKPMLSDDLLYKLYITTIYLMNYINEDAGNDTVMSKSIMHQFLEMIEDYLNNQTENISENTINEMVELSDILLKNNQHNYTTDDLIKCNQYINLIKNTDKYDNGIIDRLQIIKYNFLSQYFIYSLESQNISMLKNLDNKFFFKNTGQIINEILQLVDNNPVLDDLSNMEYLYSGEFETEHNHLLCTDSSNLSRYFMNTFNIFTAHELNPIKKLSVRDIYDIIDTTFMSVREIYNICMNNGSINNILVKLDKYQDKLLNKLVLTNKIGQYFYDFLQNKPIEQQNKKDLIKIIDSFGIDLENYMCNKIIPLYNQLVLNNNKNSTIIILAIISKDLDSFFLPNSSASSFKQVIIEDLTNGNKEDPLYLYLKLIGNEYYSYLKFFLDYCCENDLDYDSITNPLESLDITVLKNDNNTNRILSVKDCLNYFMDYLWDHSYPSMKQFGFNEKISDVINKYSSNKSNKSNKSNESDKSSESDKSSESSNHDDKISKIINLLSGSFDTNGFVLNRYLEEFTKNDEISEIQNLSEKSNIIYGLNLYLGKLLILLEQQYNSGLEIKNKISNILYRNKKACTAWIKKLAHYLVDEISISTNSETIDSHKSDWFEIYSQTNLSESRIDGYYKMIGNIDELTIFSNNDKSSRTIILPLCFYFNRNIALSLPLNASINLTYTINIKLKELSDVLFKEEFSEYIDNTGSIVKPKLSNVHLMCEYIYLSNEERQAFVTKHLQYLVDEFQYSTTNITDNNLTPVYKIGTNKISCVVKKNGKKTTETYFNKGIYVDQNNVNVDDNELILRKDLEVKPSKNKSGISSTMIQHTIIDTDPKIHFKRVSIENHFSNPTKMMAILIRPDLHIITDKRDYSSDYFFGEKQWSNYGVHSWYDFSQVRKIREDYYTKFRQKINNLEDPVYGFLNIINHTIENMKIPEIPDKLIKYCEQIKSMYIKHSDEIFDQSNIQKIRDNLHILKINFDITDKQLLLQMIYDICYNMDVSLPTNSIIIDEFRRLDSNFTLDDDNLYVNYEFFKDCICSILKLSILQGRSDELYQLIQQIYDKHNENQINLLINKLSEIIPISNHTYSFTNIMYKAKNLCLLHKCDNHIVNLINQIQDKIDFMNSSELSCVNNMKTVSSTYKDIINQIIVNTNYLDHIPSYIIDTISNKMLETLNIIIDKQYIKIIPYNKLIKPNPKINPLISGHLTFNNISTMPENSDHTFWTACQTYQHFKHDTETGINLYSWAIKPFNEQNSGSANLSRIDRFMSILNIHPIISSKNSASIITMTLSINIINYLSGLCGKAWEKY.

Positions 1319–1345 (NKSNKSNKSNESDKSSESDKSSESSNH) are disordered. Residues 1326–1345 (KSNESDKSSESDKSSESSNH) show a composition bias toward basic and acidic residues.

Belongs to the NCLDV major capsid protein family.

Its subcellular location is the virion. In Acanthamoeba polyphaga mimivirus (APMV), this protein is Probable capsid protein 3.